The primary structure comprises 79 residues: MKLTCVLIITVLFLTASQLITADYSGDKRQYRAVRLRDEMRNFKGARDCGEQGQGCYTRPCCPGLHCAAGATGGGSCQP.

Residues 1–22 form the signal peptide; it reads MKLTCVLIITVLFLTASQLITA. The propeptide occupies 23–47; that stretch reads DYSGDKRQYRAVRLRDEMRNFKGAR. 3 cysteine pairs are disulfide-bonded: Cys-49/Cys-62, Cys-56/Cys-67, and Cys-61/Cys-77. Residues Pro-60 and Pro-63 each carry the 4-hydroxyproline modification.

This sequence belongs to the conotoxin O1 superfamily. As to expression, expressed by the venom duct.

The protein localises to the secreted. Its function is as follows. Ion channel inhibitor that inhibits the increase in intracellular calcium upon depolarization in DRG neurons. In vivo, both intraperitoneal and intracranial injections into mice induce hyperactivity. This is Conotoxin Vi6.4 from Conus virgo (Virgin cone).